We begin with the raw amino-acid sequence, 205 residues long: Mitochondrial ATP-independent inner membrane protease subunit 2 (205 aa).

Active-site residues include Glu59 and Arg104.

This sequence belongs to the peptidase S26 family. IMP1 subfamily. In terms of assembly, heterodimer of 2 subunits, IMP1A/B and IMP12.

It is found in the mitochondrion inner membrane. Catalyzes the removal of transit peptides required for the targeting of proteins from the mitochondrial matrix, across the inner membrane, into the inter-membrane space. The polypeptide is Mitochondrial ATP-independent inner membrane protease subunit 2 (Arabidopsis thaliana (Mouse-ear cress)).